The chain runs to 401 residues: Heat stress transcription factor A-4a (401 aa).

Residues 13-107 (LPPFLTKTYE…LMKNIHRRKP (95 aa)) mediate DNA binding. The hydrophobic repeat HR-A/B stretch occupies residues 122–188 (PLTDSERVRM…TMVSFVSQVL (67 aa)). The Nuclear localization signal signature appears at 207-213 (RKRRFPR). The short motif at 256 to 265 (IAIWENLVSD) is the AHA1 element. Positions 341 to 350 (DGFWQQFFSE) match the AHA2 motif. The segment at 351 to 373 (NPGSTEQREVQLERKDDKDKAGV) is disordered. A compositionally biased stretch (basic and acidic residues) spans 356-373 (EQREVQLERKDDKDKAGV). A Nuclear export signal motif is present at residues 388-395 (ITEQLGHL).

Belongs to the HSF family. Class A subfamily. Homotrimer. Exhibits temperature-dependent phosphorylation.

It localises to the cytoplasm. It is found in the nucleus. Functionally, transcriptional activator that specifically binds DNA sequence 5'-AGAAnnTTCT-3' known as heat shock promoter elements (HSE). This is Heat stress transcription factor A-4a (HSFA4A) from Arabidopsis thaliana (Mouse-ear cress).